The primary structure comprises 407 residues: MRGIVTRIVLSTQKCLPSVNCTRRYYSKQKDISIVRQRLGRPGNHLKIGIVGMPNIGKSTLFQILTKTNLGNPANYPFATIDPVHAKAPVLDSQYELLCEIYQPKTRIPAQLTIYDTAGLTRNSSKGEGLGNAFLSNIRSVDALFQLVRAFPEAQVPHVEKSVDPVRDLQIIQEELLLKDAEFLESYLKKEGRSPKTCAKALDTARRALEVVLGKGRQISKAEWNDEQIPILNSLNLLTAKPVVYLVNMDQDDYLSDEQEALKGIKEWVEKNSFGDQVIPLSVLFEEQLFMLTPEEAAQECASLGKNSQLSEIICAGYSALNLIHYFTASEKIVQAWTIADGSKAPDAAGIIHSDFKKKFVAGEVIKFSDFEKYKSVDACKSVGKCKTKGKDYTVEPGDIIFWKIAR.

The OBG-type G domain occupies 46–301 (LKIGIVGMPN…LTPEEAAQEC (256 aa)). Residues 55-60 (NIGKST) and M249 each bind ATP. The 84-residue stretch at 322–405 (NLIHYFTASE…EPGDIIFWKI (84 aa)) folds into the TGS domain.

It belongs to the TRAFAC class OBG-HflX-like GTPase superfamily. OBG GTPase family.

Hydrolyzes ATP, and can also hydrolyze GTP with lower efficiency. Has lower affinity for GTP. The polypeptide is Obg-like ATPase homolog (Schizosaccharomyces pombe (strain 972 / ATCC 24843) (Fission yeast)).